Reading from the N-terminus, the 526-residue chain is Cell adhesion molecule CEACAM1 (526 aa).

The signal sequence occupies residues 1 to 34 (MGHLSAPLHRVRVPWQGLLLTASLLTFWNPPTTA). The residue at position 35 (Q35) is a Pyrrolidone carboxylic acid. In terms of domain architecture, Ig-like V-type spans 35-142 (QLTTESMPFN…EATGQFHVYP (108 aa)). Topologically, residues 35-428 (QLTTESMPFN…LPQENGLSPG (394 aa)) are extracellular. Positions 39 to 142 (ESMPFNVAEG…EATGQFHVYP (104 aa)) are required for homophilic binding. 20 N-linked (GlcNAc...) asparagine glycosylation sites follow: N104, N111, N115, N152, N182, N197, N208, N224, N232, N254, N274, N288, N292, N302, N309, N345, N351, N363, N378, and N405. 3 Ig-like C2-type domains span residues 145–232 (PKPS…VTLN), 237–317 (PDTP…KTII), and 323–413 (PVVA…IMLN). C167 and C215 form a disulfide bridge. A disulfide bridge connects residues C259 and C299. Cysteines 348 and 396 form a disulfide. Residues 429 to 452 (AIAGIVIGVVALVALIAVALACFL) traverse the membrane as a helical segment. Residues 450-462 (CFLHFGKTGRASD) are interaction with calmodulin. Residues 452 to 526 (LHFGKTGRAS…EIIYSEVKKQ (75 aa)) form an interaction with FLNA region. Over 453 to 526 (HFGKTGRASD…EIIYSEVKKQ (74 aa)) the chain is Cytoplasmic. Residues 461 to 482 (SDQRDLTEHKPSVSNHTQDHSN) are compositionally biased toward basic and acidic residues. A disordered region spans residues 461-513 (SDQRDLTEHKPSVSNHTQDHSNDPPNKMNEVTYSTLNFEAQQPTQPTSASPSL). A compositionally biased stretch (polar residues) spans 489–513 (NEVTYSTLNFEAQQPTQPTSASPSL). Residues 489-526 (NEVTYSTLNFEAQQPTQPTSASPSLTATEIIYSEVKKQ) form a required for interaction with PTPN11 and PTPN6 and for control of phosphorylation level region. The residue at position 493 (Y493) is a Phosphotyrosine; by SRC, LCK, INSR and EGFR. S508 is subject to Phosphoserine. Residue Y520 is modified to Phosphotyrosine; by INSR, SRC and LCK. The essential for interaction with PTPN11 and PTPN6 stretch occupies residues 520-523 (YSEV).

It belongs to the immunoglobulin superfamily. CEA family. As to quaternary structure, monomer. Oligomer. Heterodimer. Homodimer. Cis-dimer/oligomer (via Ig-like C2-type and/or via cytoplasmic domains); induced by trans-homophilic cell adhesion through an allosteric mechanism transmitted by the Ig-like V-type domain, and is regulated by intracellular calcium and calmodulin. Interacts (via cytoplasmic domain) with calmodulin in a calcium dependent manner; reduces homophilic cell adhesion through dissociation of dimer. Isoform 1 interacts (via cytoplasmic domain) with PTPN11 (preferentially) and PTPN6; cis-homodimer form is preferred; this interaction is decreased by formation of Isoform 1 /Isoform 8 cis-heterodimers and is dependent on the monomer/dimer equilibrium; this interaction is phosphorylation-dependent. Isoform 1 interacts with LYN. Isoform 1 interacts (via cytoplasmic domain) with SRC (via SH2 domain); this interaction is regulated by trans-homophilic cell adhesion. Isoform 1 interacts (via cytoplasmic domain) with LCK; mediates phosphorylation at Tyr-493 and Tyr-520 resulting in PTPN6 association. Isoform 1 interacts with PTPN6; this interaction is phosphorylation-dependent and causes a profound decrease in TCR stimulation-induced CD247 and ZAP70 phosphorylation. Isoform 1 interacts with TCR/CD3 complex through TCR beta chain and CD3E; colocalizes at the cell surface and upon stimulation of the TCR/CD3 complex recruits PTPN6 in the TCR/CD3 complex, resulting in dephosphorylation of CD247 and ZAP70. Isoform 1 interacts (via cytoplasmic domain) with SHC1 (via SH2 domain); SHC1 mediates interaction with INSR or EGFR in a Ser-508 phosphorylation-dependent manner. Isoform 1 interacts with EGFR; the interaction is indirect. Isoform 1 interacts with CSF3R; down-regulates the CSF3R-STAT3 pathway through recruitment of PTPN6 that dephosphorylates CSF3R. Isoform 1 (phosphorylated form) interacts with TLR4 and SYK; recruits PTPN6 that dephosphorylates SYK, reducing the production of reactive oxygen species (ROS) and lysosome disruption, leading to a reduction of the inflammasome activity. Isoform 1 interacts with FLNA; inhibits cell migration and cell scattering by interfering with the interaction of FLNA with RALA. Isoform 1 interacts (via cytoplasmic domain) with PXN; the interaction is phosphotyrosyl-dependent. Isoform 1 interacts with KLRK1; recruits PTPN6 that dephosphorylates VAV1. Isoform 1 interacts with CEACAM8. Isoform 1 interacts with FASN; this interaction is insulin and phosphorylation-dependent; reduces fatty-acid synthase activity. Interacts (via Ig-like V-type) with HAVCR2 (via Ig-like V-type); facilitates the maturation and cell surface expression of HAVCR2 thereby regulating T cell tolerance induction. Isoform 8 interacts (via the cytoplasmic domain) with ANXA2; this interaction is regulated by phosphorylation and appears in the AIIt complex. Interacts (via Lewis X moieties) with CD209 (via C-type lectin domain); this interaction is regulated by the glycosylation pattern of CEACAM1 on cell types and regulates contact between dendritic cells and neutrophils. Phosphorylated on serine and tyrosine. Isoform 1 is phosphorylated on tyrosine by Src family kinases like SRC and LCK and by receptor like CSF3R, EGFR and INSR upon stimulation. Phosphorylated at Ser-508; mediates activity. Phosphorylated at Tyr-493; regulates activity. Phosphorylated at Tyr-493 by EGFR and INSR upon stimulation; this phosphorylation is Ser-508-phosphorylation-dependent; mediates cellular internalization; increases interaction with downstream proteins like SHC1 and FASN. Phosphorylated at Tyr-493 and Tyr-520 by LCK; mediates PTPN6 association and is regulated by homophilic ligation of CEACAM1 in the absence of T cell activation. Phosphorylated at Tyr-520; mediates interaction with PTPN11. Post-translationally, phosphorylated on serine and threonine. As to expression, expressed in columnar epithelial cells of the colon (at protein level). The predominant forms expressed by T cells are those containing a long cytoplasmic domain. Expressed in granulocytes and lymphocytes. Leukocytes only express isoforms 6 and isoform 1.

It localises to the cell membrane. It is found in the lateral cell membrane. Its subcellular location is the apical cell membrane. The protein resides in the basal cell membrane. The protein localises to the cell junction. It localises to the adherens junction. It is found in the secreted. Its subcellular location is the cytoplasmic vesicle. The protein resides in the secretory vesicle membrane. The protein localises to the cell projection. It localises to the microvillus membrane. Functionally, cell adhesion protein that mediates homophilic cell adhesion in a calcium-independent manner. Plays a role as coinhibitory receptor in immune response, insulin action and also functions as an activator during angiogenesis. Its coinhibitory receptor function is phosphorylation- and PTPN6 -dependent, which in turn, suppress signal transduction of associated receptors by dephosphorylation of their downstream effectors. Plays a role in immune response, of T cells, natural killer (NK) and neutrophils. Upon TCR/CD3 complex stimulation, inhibits TCR-mediated cytotoxicity by blocking granule exocytosis by mediating homophilic binding to adjacent cells, allowing interaction with and phosphorylation by LCK and interaction with the TCR/CD3 complex which recruits PTPN6 resulting in dephosphorylation of CD247 and ZAP70. Also inhibits T cell proliferation and cytokine production through inhibition of JNK cascade and plays a crucial role in regulating autoimmunity and anti-tumor immunity by inhibiting T cell through its interaction with HAVCR2. Upon natural killer (NK) cells activation, inhibit KLRK1-mediated cytolysis of CEACAM1-bearing tumor cells by trans-homophilic interactions with CEACAM1 on the target cell and lead to cis-interaction between CEACAM1 and KLRK1, allowing PTPN6 recruitment and then VAV1 dephosphorylation. Upon neutrophils activation negatively regulates IL1B production by recruiting PTPN6 to a SYK-TLR4-CEACAM1 complex, that dephosphorylates SYK, reducing the production of reactive oxygen species (ROS) and lysosome disruption, which in turn, reduces the activity of the inflammasome. Down-regulates neutrophil production by acting as a coinhibitory receptor for CSF3R by down-regulating the CSF3R-STAT3 pathway through recruitment of PTPN6 that dephosphorylates CSF3R. Also regulates insulin action by promoting INS clearance and regulating lipogenesis in liver through regulating insulin signaling. Upon INS stimulation, undergoes phosphorylation by INSR leading to INS clearance by increasing receptor-mediated insulin endocytosis. This inernalization promotes interaction with FASN leading to receptor-mediated insulin degradation and to reduction of FASN activity leading to negative regulation of fatty acid synthesis. INSR-mediated phosphorylation also provokes a down-regulation of cell proliferation through SHC1 interaction resulting in decrease coupling of SHC1 to the MAPK3/ERK1-MAPK1/ERK2 and phosphatidylinositol 3-kinase pathways. Functions as activator in angiogenesis by promoting blood vessel remodeling through endothelial cell differentiation and migration and in arteriogenesis by increasing the number of collateral arteries and collateral vessel calibers after ischemia. Also regulates vascular permeability through the VEGFR2 signaling pathway resulting in control of nitric oxide production. Down-regulates cell growth in response to EGF through its interaction with SHC1 that mediates interaction with EGFR resulting in decrease coupling of SHC1 to the MAPK3/ERK1-MAPK1/ERK2 pathway. Negatively regulates platelet aggregation by decreasing platelet adhesion on type I collagen through the GPVI-FcRgamma complex. Inhibits cell migration and cell scattering through interaction with FLNA; interferes with the interaction of FLNA with RALA. Mediates bile acid transport activity in a phosphorylation dependent manner. Negatively regulates osteoclastogenesis. Cell adhesion protein that mediates homophilic cell adhesion in a calcium-independent manner. Promotes populations of T cells regulating IgA production and secretion associated with control of the commensal microbiota and resistance to enteropathogens. This is Cell adhesion molecule CEACAM1 from Homo sapiens (Human).